The chain runs to 673 residues: Armadillo repeat-containing protein 8 (673 aa).

An N-acetylalanine modification is found at Ala-2. 14 ARM repeats span residues 51–92 (NKQK…SLAM), 95–134 (ENNVKSLLDCHIIPALLQGLLSPDLKFIEACLRCLRTIFT), 138–176 (TPEELLYTDATVIPHLMALLSRSRYTQEYICQIFSHCCK), 178–217 (PDHQTILFNHGAVQNIAHLLTSLSYKVRMQALKCFSVLAF), 224–265 (MTLV…YMCR), 269–309 (IRTD…YLIE), 313–352 (ELQRIASITDHLIAMLADYFKYPSSVSAITDIKRLDHDLK), 374–413 (DIRKKIIETENMMDRIVTGLSESSVKVRLAAVRCLHSLSR), 416–455 (QQLRTSFQDHAVWKPLMKVLQNAPDEILVVASSMLCNLLL), 458–497 (SPSKEPILESGAVELLCGLTQSENPALRVNGIWALMNMAF), 501–540 (QKIKADILRSLSTEQLFRLLSDSDLNVLMKTLGLLRNLLS), 543–585 (PHID…NIAD), 588–627 (TAKDLIMTNDDILQKIKYYMGHSHVKLQLAAMFCISNLIW), and 634–673 (QERQDKLRDMGIVDILHKLSQSPDSNLCDKAKMALQQYLA). At Ser-337 the chain carries Phosphoserine. Ser-512 is modified (phosphoserine).

As to quaternary structure, identified in the CTLH complex that contains GID4, RANBP9 and/or RANBP10, MKLN1, MAEA, RMND5A (or alternatively its paralog RMND5B), GID8, ARMC8, WDR26 and YPEL5. Within this complex, MAEA, RMND5A (or alternatively its paralog RMND5B), GID8, WDR26, and RANBP9 and/or RANBP10 form the catalytic core, while GID4, MKLN1, ARMC8 and YPEL5 have ancillary roles.

It localises to the nucleus. The protein resides in the cytoplasm. Functionally, component of the CTLH E3 ubiquitin-protein ligase complex that selectively accepts ubiquitin from UBE2H and mediates ubiquitination and subsequent proteasomal degradation of the transcription factor HBP1. This is Armadillo repeat-containing protein 8 (ARMC8) from Homo sapiens (Human).